The primary structure comprises 180 residues: MEQRRLASTEWVDIVNEENEVIAQASREQMRAQCLRHRATYIVVHDGMGKILVQRRTETKDFLPGMLDATAGGVVQADEQLLESARREAEEELGIAGVPFAEHGQFYFEDKNCRVWGALFSCVSHGPFALQEDEVSEVCWLTPEEITARCDEFTPDSLKALALWMKRNAKNEAVETETAE.

The Nudix hydrolase domain maps to 35-163 (LRHRATYIVV…TPDSLKALAL (129 aa)). Positions 72-94 (GGVVQADEQLLESARREAEEELG) match the Nudix box motif. Positions 88 and 92 each coordinate Mg(2+).

The protein belongs to the Nudix hydrolase family. It depends on Mg(2+) as a cofactor.

This is an uncharacterized protein from Escherichia coli O157:H7.